We begin with the raw amino-acid sequence, 848 residues long: ATP-dependent Clp protease ATP-binding subunit ClpC1 (848 aa).

Positions 2–144 constitute a Clp R domain; the sequence is FERFTDRARR…RQQVIQLLSG (143 aa). 2 repeat regions span residues 5–70 and 80–144; these read FTDR…IGQG and FTPR…LLSG. Residues 425 to 460 form the UVR domain; it reads DEKIADARREKESAIDAQDFEKAAALRDKEKQLVAQ. ATP is bound by residues 553–560 and 617–626; these read GPSGVGKT and KPFSVVLFDE. The segment at 811 to 848 is disordered; sequence GQGEDAKFTFSGGPKRAETAEPDLAGAGAAGAPTAGTE. Low complexity predominate over residues 835–848; sequence AGAGAAGAPTAGTE.

This sequence belongs to the ClpA/ClpB family. ClpC subfamily.

In terms of biological role, ATP-dependent specificity component of the Clp protease. It directs the protease to specific substrates. Can perform chaperone functions in the absence of ClpP. Degrades anti-sigma-E factor RseA in the presence of ClpP2. The protein is ATP-dependent Clp protease ATP-binding subunit ClpC1 (clpC1) of Mycolicibacterium smegmatis (strain ATCC 700084 / mc(2)155) (Mycobacterium smegmatis).